The chain runs to 123 residues: Ribonuclease P protein component 1 (123 aa).

The disordered stretch occupies residues 73–93 (PDNGVGTAFKPAGGETRQTTG).

It belongs to the eukaryotic/archaeal RNase P protein component 1 family. Consists of a catalytic RNA component and at least 4-5 protein subunits.

The protein resides in the cytoplasm. The enzyme catalyses Endonucleolytic cleavage of RNA, removing 5'-extranucleotides from tRNA precursor.. Part of ribonuclease P, a protein complex that generates mature tRNA molecules by cleaving their 5'-ends. This Halobacterium salinarum (strain ATCC 29341 / DSM 671 / R1) protein is Ribonuclease P protein component 1.